Consider the following 310-residue polypeptide: Small ribosomal subunit protein uS2 (310 aa).

Positions 249-272 (WERDLLEGEKAEKKDDAEAAEKPA) are enriched in basic and acidic residues. The segment at 249-310 (WERDLLEGEK…EAPAADAEQA (62 aa)) is disordered. Residues 273–310 (EAPAAEAPAAEAAEAPAAEAAPAEEPAAEAPAADAEQA) are compositionally biased toward low complexity.

Belongs to the universal ribosomal protein uS2 family.

In Streptomyces coelicolor (strain ATCC BAA-471 / A3(2) / M145), this protein is Small ribosomal subunit protein uS2 (rpsB).